The following is a 332-amino-acid chain: Anthranilate phosphoribosyltransferase (332 aa).

Residues glycine 79, glycine 82–aspartate 83, serine 87, asparagine 89–threonine 92, lysine 107–serine 115, and serine 119 each bind 5-phospho-alpha-D-ribose 1-diphosphate. Glycine 79 is an anthranilate binding site. Mg(2+) is bound at residue serine 91. Asparagine 110 is a binding site for anthranilate. Anthranilate is bound at residue arginine 165. Mg(2+) contacts are provided by aspartate 223 and glutamate 224.

Belongs to the anthranilate phosphoribosyltransferase family. Homodimer. Mg(2+) is required as a cofactor.

The enzyme catalyses N-(5-phospho-beta-D-ribosyl)anthranilate + diphosphate = 5-phospho-alpha-D-ribose 1-diphosphate + anthranilate. The protein operates within amino-acid biosynthesis; L-tryptophan biosynthesis; L-tryptophan from chorismate: step 2/5. Catalyzes the transfer of the phosphoribosyl group of 5-phosphorylribose-1-pyrophosphate (PRPP) to anthranilate to yield N-(5'-phosphoribosyl)-anthranilate (PRA). The sequence is that of Anthranilate phosphoribosyltransferase from Sodalis glossinidius (strain morsitans).